A 157-amino-acid polypeptide reads, in one-letter code: Crossover junction endodeoxyribonuclease RuvC (157 aa).

Active-site residues include aspartate 7, glutamate 66, and aspartate 139. Mg(2+) contacts are provided by aspartate 7, glutamate 66, and aspartate 139.

Belongs to the RuvC family. In terms of assembly, homodimer which binds Holliday junction (HJ) DNA. The HJ becomes 2-fold symmetrical on binding to RuvC with unstacked arms; it has a different conformation from HJ DNA in complex with RuvA. In the full resolvosome a probable DNA-RuvA(4)-RuvB(12)-RuvC(2) complex forms which resolves the HJ. Requires Mg(2+) as cofactor.

It localises to the cytoplasm. It catalyses the reaction Endonucleolytic cleavage at a junction such as a reciprocal single-stranded crossover between two homologous DNA duplexes (Holliday junction).. Functionally, the RuvA-RuvB-RuvC complex processes Holliday junction (HJ) DNA during genetic recombination and DNA repair. Endonuclease that resolves HJ intermediates. Cleaves cruciform DNA by making single-stranded nicks across the HJ at symmetrical positions within the homologous arms, yielding a 5'-phosphate and a 3'-hydroxyl group; requires a central core of homology in the junction. The consensus cleavage sequence is 5'-(A/T)TT(C/G)-3'. Cleavage occurs on the 3'-side of the TT dinucleotide at the point of strand exchange. HJ branch migration catalyzed by RuvA-RuvB allows RuvC to scan DNA until it finds its consensus sequence, where it cleaves and resolves the cruciform DNA. In terms of biological role, required for efficient infection in a mouse model system. The chain is Crossover junction endodeoxyribonuclease RuvC from Helicobacter pylori (strain G27).